A 540-amino-acid polypeptide reads, in one-letter code: Putative laccase-11 (540 aa).

Plastocyanin-like domains follow at residues 1-114, 124-279, and 389-523; these read MATV…PPRG, REVP…YYGA, and NFPA…NDGP. Cu cation is bound by residues histidine 48, histidine 50, histidine 93, and histidine 95. The Cu cation site is built by histidine 440, histidine 443, histidine 445, histidine 502, cysteine 503, histidine 504, and histidine 508.

It belongs to the multicopper oxidase family. Requires Cu cation as cofactor.

It is found in the secreted. Its subcellular location is the extracellular space. The protein resides in the apoplast. It catalyses the reaction 4 hydroquinone + O2 = 4 benzosemiquinone + 2 H2O. Lignin degradation and detoxification of lignin-derived products. This is Putative laccase-11 (LAC11) from Oryza sativa subsp. japonica (Rice).